A 59-amino-acid polypeptide reads, in one-letter code: Large ribosomal subunit protein bL32c (59 aa).

Residues 37–59 (SRSFSSGNEHPKPKGFSGQQTNK) form a disordered region.

Belongs to the bacterial ribosomal protein bL32 family.

The protein localises to the plastid. It localises to the chloroplast. In Hordeum vulgare (Barley), this protein is Large ribosomal subunit protein bL32c.